The primary structure comprises 125 residues: Small ribosomal subunit protein uS13 (125 aa).

A disordered region spans residues 90–125 (QRHRKGLPVRGQRTKTNARTRKGPKRTVAGKKKATK).

It belongs to the universal ribosomal protein uS13 family. As to quaternary structure, part of the 30S ribosomal subunit. Forms a loose heterodimer with protein S19. Forms two bridges to the 50S subunit in the 70S ribosome.

Functionally, located at the top of the head of the 30S subunit, it contacts several helices of the 16S rRNA. In the 70S ribosome it contacts the 23S rRNA (bridge B1a) and protein L5 of the 50S subunit (bridge B1b), connecting the 2 subunits; these bridges are implicated in subunit movement. Contacts the tRNAs in the A and P-sites. The polypeptide is Small ribosomal subunit protein uS13 (Bifidobacterium longum subsp. infantis (strain ATCC 15697 / DSM 20088 / JCM 1222 / NCTC 11817 / S12)).